A 105-amino-acid polypeptide reads, in one-letter code: uncharacterized protein (105 aa).

The region spanning 2–42 is the Helicase C-terminal domain; sequence QVLIGTKLVTEGIDIKQLMMVIMLDNRLNIIELIQGVGRLR.

It belongs to the helicase family. Yeast subtelomeric Y' repeat subfamily.

This is an uncharacterized protein from Saccharomyces cerevisiae (strain ATCC 204508 / S288c) (Baker's yeast).